The chain runs to 350 residues: tRNA uridine(34) hydroxylase (350 aa).

Residues 146–240 (DDPDAVFIDM…YARRAREQGL (95 aa)) enclose the Rhodanese domain. The active-site Cysteine persulfide intermediate is the Cys200. Basic and acidic residues predominate over residues 319 to 328 (RRRRAGRENG). The interval 319–350 (RRRRAGRENGNKIFNKSRGRLNSKLSIPDPAE) is disordered.

It belongs to the TrhO family.

It carries out the reaction uridine(34) in tRNA + AH2 + O2 = 5-hydroxyuridine(34) in tRNA + A + H2O. Functionally, catalyzes oxygen-dependent 5-hydroxyuridine (ho5U) modification at position 34 in tRNAs. This chain is tRNA uridine(34) hydroxylase, found in Salmonella dublin (strain CT_02021853).